Reading from the N-terminus, the 826-residue chain is Zinc phosphodiesterase ELAC protein 2 (826 aa).

A mitochondrion-targeting transit peptide spans 1–16 (MWALCSLLRSATGRTM). Polar residues predominate over residues 15–27 (TMSQGRTISQGSA). 2 disordered regions span residues 15-53 (TMSQ…GSSG) and 187-231 (SEQR…VSQR). Residues Ser-199, Ser-208, Ser-212, Ser-229, Ser-618, and Ser-736 each carry the phosphoserine modification. Basic and acidic residues predominate over residues 208 to 224 (SPERSSDSESNESEPHL). The segment at 798-826 (ALTDDLEDGEPQQKRAHTEEPQSKKVRAQ) is disordered. Over residues 808 to 820 (PQQKRAHTEEPQS) the composition is skewed to basic and acidic residues.

Belongs to the RNase Z family. Homodimer. Interacts with PTCD1. Zn(2+) is required as a cofactor.

Its subcellular location is the mitochondrion. It localises to the mitochondrion matrix. The protein localises to the mitochondrion nucleoid. It is found in the nucleus. It catalyses the reaction Endonucleolytic cleavage of RNA, removing extra 3' nucleotides from tRNA precursor, generating 3' termini of tRNAs. A 3'-hydroxy group is left at the tRNA terminus and a 5'-phosphoryl group is left at the trailer molecule.. In terms of biological role, zinc phosphodiesterase, which displays mitochondrial tRNA 3'-processing endonuclease activity. Involved in tRNA maturation, by removing a 3'-trailer from precursor tRNA. Associates with mitochondrial DNA complexes at the nucleoids to initiate RNA processing and ribosome assembly. This chain is Zinc phosphodiesterase ELAC protein 2 (ELAC2), found in Macaca fascicularis (Crab-eating macaque).